The chain runs to 285 residues: ATP synthase gamma chain (285 aa).

It belongs to the ATPase gamma chain family. In terms of assembly, F-type ATPases have 2 components, CF(1) - the catalytic core - and CF(0) - the membrane proton channel. CF(1) has five subunits: alpha(3), beta(3), gamma(1), delta(1), epsilon(1). CF(0) has three main subunits: a, b and c.

It localises to the cell membrane. In terms of biological role, produces ATP from ADP in the presence of a proton gradient across the membrane. The gamma chain is believed to be important in regulating ATPase activity and the flow of protons through the CF(0) complex. The polypeptide is ATP synthase gamma chain (Geobacillus sp. (strain WCH70)).